We begin with the raw amino-acid sequence, 158 residues long: Fucolectin (158 aa).

The segment at 16 to 148 is F5/8 type C-like; sequence KATQSAQLRG…TSESLHLCEV (133 aa). Ca(2+)-binding residues include N35, D38, N40, and S49. Disulfide bonds link C50/C146, C82/C83, and C108/C124. Residues H52 and R79 each contribute to the alpha-L-fucose site. The short motif at 79 to 81 is the Cell attachment site element; the sequence is RGD. R86 is a binding site for alpha-L-fucose. Residues C146 and E147 each contribute to the Ca(2+) site.

Belongs to the fucolectin family. As to quaternary structure, homotrimer.

It is found in the secreted. In terms of biological role, acts as a defensive agent. Recognizes blood group fucosylated oligosaccharides including A, B, H and Lewis B-type antigens. Does not recognize Lewis A antigen and has low affinity for monovalent haptens. This chain is Fucolectin, found in Anguilla anguilla (European freshwater eel).